A 207-amino-acid polypeptide reads, in one-letter code: Histidine biosynthesis bifunctional protein HisIE (207 aa).

The tract at residues 1–117 is phosphoribosyl-AMP cyclohydrolase; it reads MQNFKELNEK…KISKNADFVF (117 aa). The segment at 118–207 is phosphoribosyl-ATP pyrophosphohydrolase; sequence LARLEKLINA…ISKLKERHKA (90 aa).

In the N-terminal section; belongs to the PRA-CH family. The protein in the C-terminal section; belongs to the PRA-PH family.

It localises to the cytoplasm. The catalysed reaction is 1-(5-phospho-beta-D-ribosyl)-ATP + H2O = 1-(5-phospho-beta-D-ribosyl)-5'-AMP + diphosphate + H(+). It carries out the reaction 1-(5-phospho-beta-D-ribosyl)-5'-AMP + H2O = 1-(5-phospho-beta-D-ribosyl)-5-[(5-phospho-beta-D-ribosylamino)methylideneamino]imidazole-4-carboxamide. Its pathway is amino-acid biosynthesis; L-histidine biosynthesis; L-histidine from 5-phospho-alpha-D-ribose 1-diphosphate: step 2/9. The protein operates within amino-acid biosynthesis; L-histidine biosynthesis; L-histidine from 5-phospho-alpha-D-ribose 1-diphosphate: step 3/9. This is Histidine biosynthesis bifunctional protein HisIE (hisI) from Campylobacter jejuni subsp. jejuni serotype O:2 (strain ATCC 700819 / NCTC 11168).